We begin with the raw amino-acid sequence, 585 residues long: Pyruvate kinase (585 aa).

A substrate-binding site is contributed by Arg32. 4 residues coordinate K(+): Asn34, Ser36, Asp66, and Thr67. ATP is bound at residue 34-37 (NFSH). The ATP site is built by Arg73 and Lys156. Residue Glu222 coordinates Mg(2+). Residues Gly245, Asp246, and Thr278 each contribute to the substrate site. Residue Asp246 coordinates Mg(2+).

Belongs to the pyruvate kinase family. The protein in the C-terminal section; belongs to the PEP-utilizing enzyme family. As to quaternary structure, homotetramer. Mg(2+) serves as cofactor. K(+) is required as a cofactor.

The enzyme catalyses pyruvate + ATP = phosphoenolpyruvate + ADP + H(+). Its pathway is carbohydrate degradation; glycolysis; pyruvate from D-glyceraldehyde 3-phosphate: step 5/5. This is Pyruvate kinase (pyk) from Bacillus licheniformis.